The primary structure comprises 520 residues: Cytochrome b5 reductase 4 (520 aa).

Met-1 bears the N-acetylmethionine mark. The segment at 1 to 27 (MLNVPSQAFPAPGSQQRVASQGRSKVP) is disordered. Over residues 13–23 (GSQQRVASQGR) the composition is skewed to polar residues. In terms of domain architecture, Cytochrome b5 heme-binding spans 54–130 (LIEVTEEELK…LKECLVGRMA (77 aa)). His-89 and His-112 together coordinate heme. Positions 164–255 (PSSPSYDWFQ…KETVSWKCLG (92 aa)) constitute a CS domain. The FAD-binding FR-type domain maps to 272-384 (LYYRQCQLIS…SGPEGNFKVS (113 aa)). Residues 364 to 379 (DRLQIGDFVSVSGPEG) and 391 to 423 (DLFLLAAGTGFTPMVTVLNHALTHMSSLRKVKL) contribute to the FAD site.

This sequence belongs to the flavoprotein pyridine nucleotide cytochrome reductase family. It depends on FAD as a cofactor. In terms of tissue distribution, isoform 2 is expressed in testis, brain, skeletal muscle and in the male germline.

The protein resides in the endoplasmic reticulum. It catalyses the reaction 2 Fe(III)-[cytochrome b5] + NADH = 2 Fe(II)-[cytochrome b5] + NAD(+) + H(+). Its function is as follows. NADH-cytochrome b5 reductase involved in endoplasmic reticulum stress response pathway. Plays a critical role in protecting pancreatic beta-cells against oxidant stress, possibly by protecting the cell from excess buildup of reactive oxygen species (ROS). The protein is Cytochrome b5 reductase 4 (Cyb5r4) of Rattus norvegicus (Rat).